We begin with the raw amino-acid sequence, 579 residues long: Putative diflavin flavoprotein A 2 (579 aa).

A zinc metallo-hydrolase region spans residues 50-243; sequence QNGTTYNSYL…GKIKIIANGH (194 aa). Fe cation is bound by residues histidine 99, glutamate 101, aspartate 103, histidine 166, aspartate 185, and histidine 243. Residues 272 to 460 form the Flavodoxin-like domain; that stretch reads VGLFYVADYG…MLASWVSQAS (189 aa). The segment at 461-579 is flavodoxin-reductase-like; it reads LQPLGFTIAV…VRHRKVGNYY (119 aa).

The protein in the N-terminal section; belongs to the zinc metallo-hydrolase group 3 family. This sequence in the C-terminal section; belongs to the flavodoxin reductase family. The cofactor is Fe cation.

Functionally, mediates electron transfer from NADH to oxygen, reducing it to water. This modular protein has 3 redox cofactors, in other organisms the same activity requires 2 or 3 proteins. The protein is Putative diflavin flavoprotein A 2 (dfa2) of Nostoc sp. (strain PCC 7120 / SAG 25.82 / UTEX 2576).